A 669-amino-acid chain; its full sequence is UvrABC system protein B (669 aa).

Residues 26 to 183 (TNFHAGIAKQ…RHLTELQYTR (158 aa)) form the Helicase ATP-binding domain. Residue 39–46 (GVTGSGKT) participates in ATP binding. The Beta-hairpin motif lies at 92-115 (YYDYYQPEAYVPASDTFIEKDSSI). The Helicase C-terminal domain maps to 431–597 (QVDDLISQIN…SVVRPISDIL (167 aa)). The UVR domain maps to 631-666 (AAQMKMLEQQMYQHARDLEFEDAARIRDQIQRLREA).

It belongs to the UvrB family. Forms a heterotetramer with UvrA during the search for lesions. Interacts with UvrC in an incision complex.

The protein resides in the cytoplasm. The UvrABC repair system catalyzes the recognition and processing of DNA lesions. A damage recognition complex composed of 2 UvrA and 2 UvrB subunits scans DNA for abnormalities. Upon binding of the UvrA(2)B(2) complex to a putative damaged site, the DNA wraps around one UvrB monomer. DNA wrap is dependent on ATP binding by UvrB and probably causes local melting of the DNA helix, facilitating insertion of UvrB beta-hairpin between the DNA strands. Then UvrB probes one DNA strand for the presence of a lesion. If a lesion is found the UvrA subunits dissociate and the UvrB-DNA preincision complex is formed. This complex is subsequently bound by UvrC and the second UvrB is released. If no lesion is found, the DNA wraps around the other UvrB subunit that will check the other stand for damage. The chain is UvrABC system protein B from Xylella fastidiosa (strain M12).